The following is a 228-amino-acid chain: Octanoyltransferase (228 aa).

Residues 30–213 (NKVEDIMLLL…YFSRVFDFEP (184 aa)) enclose the BPL/LPL catalytic domain. Substrate is bound by residues 75 to 82 (RGGDVTYH), 143 to 145 (AIG), and 156 to 158 (GFA). Residue Cys174 is the Acyl-thioester intermediate of the active site.

It belongs to the LipB family.

It localises to the cytoplasm. It carries out the reaction octanoyl-[ACP] + L-lysyl-[protein] = N(6)-octanoyl-L-lysyl-[protein] + holo-[ACP] + H(+). It participates in protein modification; protein lipoylation via endogenous pathway; protein N(6)-(lipoyl)lysine from octanoyl-[acyl-carrier-protein]: step 1/2. Its function is as follows. Catalyzes the transfer of endogenously produced octanoic acid from octanoyl-acyl-carrier-protein onto the lipoyl domains of lipoate-dependent enzymes. Lipoyl-ACP can also act as a substrate although octanoyl-ACP is likely to be the physiological substrate. The sequence is that of Octanoyltransferase from Desulforamulus reducens (strain ATCC BAA-1160 / DSM 100696 / MI-1) (Desulfotomaculum reducens).